The following is a 227-amino-acid chain: Paired immunoglobulin-like type 2 receptor beta (227 aa).

Positions 1-19 (MGRPLLLPLLLLLQPPAFL) are cleaved as a signal peptide. The Extracellular segment spans residues 20–191 (QPGGSTGSGP…WHLSLDTAIR (172 aa)). Positions 21–143 (PGGSTGSGPS…SGRQQLQSIK (123 aa)) constitute an Ig-like V-type domain. Asn100 is a glycosylation site (N-linked (GlcNAc...) asparagine). Residues 192 to 212 (VALAVAVLKTVILGLLCLLLL) traverse the membrane as a helical segment. Residues 213–227 (WWRRRKGSRAPSSDF) lie on the Cytoplasmic side of the membrane.

The protein localises to the membrane. Functionally, paired receptors consist of highly related activating and inhibitory receptors and are widely involved in the regulation of the immune system. PILRB is thought to act as a cellular signaling activating receptor that associates with ITAM-bearing adapter molecules on the cell surface. This Homo sapiens (Human) protein is Paired immunoglobulin-like type 2 receptor beta (PILRB).